A 469-amino-acid polypeptide reads, in one-letter code: MMKNRVTNIHFVGIGGVGMSGIAEVLHNLGFKVSGSDQARNAATEHLGSLGIQVYPGHTAEHVNGADVVVTSTAVKKENPEVVAALEQQIPVIPRALMLAELMRFRDGIAIAGTHGKTTTTSLTASILGAAGLDPTFVIGGKLNAAGTNARLGKGEYIVAEADESDASFLHLTPIMSVVTNIDEDHMDTYGHSVEKLHQAFIDFIHRMPFYGKAFLCIDSEHVRAILPKVSKPYATYGLDDTADIYATDIENVGAQMKFTVHVQMKGHEQGSFEVVLNMPGRHNVLNALAAIGVALEVGASVEAIQKGLLGFEGVGRRFQKYGDIKLPNGGTALLVDDYGHHPVEMAATLAAARGAYPEKRLVLAFQPHRYTRTRDLFEDFTKVLNTVDALVLTEVYAAGEEPIAAADSRALARAIRVLGKLEPIYCENVADLPEMLLNVLQDGDIVLNMGAGSINRVPAALLELSKQI.

113-119 lines the ATP pocket; that stretch reads GTHGKTT.

Belongs to the MurCDEF family.

The protein resides in the cytoplasm. The catalysed reaction is UDP-N-acetyl-alpha-D-muramate + L-alanine + ATP = UDP-N-acetyl-alpha-D-muramoyl-L-alanine + ADP + phosphate + H(+). The protein operates within cell wall biogenesis; peptidoglycan biosynthesis. Functionally, cell wall formation. This Neisseria meningitidis serogroup C / serotype 2a (strain ATCC 700532 / DSM 15464 / FAM18) protein is UDP-N-acetylmuramate--L-alanine ligase.